We begin with the raw amino-acid sequence, 353 residues long: Photosystem II protein D1 (353 aa).

The residue at position 2 (T2) is an N-acetylthreonine. T2 is subject to Phosphothreonine. 3 helical membrane passes run N29–S46, H118–L133, and W142–A156. H118 provides a ligand contact to chlorophyll a. Position 126 (Y126) interacts with pheophytin a. [CaMn4O5] cluster-binding residues include D170 and E189. Residues F197–L218 form a helical membrane-spanning segment. Chlorophyll a is bound at residue H198. A quinone contacts are provided by residues H215 and S264 to F265. Position 215 (H215) interacts with Fe cation. Fe cation is bound at residue H272. The helical transmembrane segment at F274–L288 threads the bilayer. Positions 332, 333, 342, and 344 each coordinate [CaMn4O5] cluster. The propeptide occupies A345–G353.

Belongs to the reaction center PufL/M/PsbA/D family. PSII is composed of 1 copy each of membrane proteins PsbA, PsbB, PsbC, PsbD, PsbE, PsbF, PsbH, PsbI, PsbJ, PsbK, PsbL, PsbM, PsbT, PsbX, PsbY, PsbZ, Psb30/Ycf12, at least 3 peripheral proteins of the oxygen-evolving complex and a large number of cofactors. It forms dimeric complexes. The cofactor is The D1/D2 heterodimer binds P680, chlorophylls that are the primary electron donor of PSII, and subsequent electron acceptors. It shares a non-heme iron and each subunit binds pheophytin, quinone, additional chlorophylls, carotenoids and lipids. D1 provides most of the ligands for the Mn4-Ca-O5 cluster of the oxygen-evolving complex (OEC). There is also a Cl(-1) ion associated with D1 and D2, which is required for oxygen evolution. The PSII complex binds additional chlorophylls, carotenoids and specific lipids.. In terms of processing, tyr-161 forms a radical intermediate that is referred to as redox-active TyrZ, YZ or Y-Z. C-terminally processed by CTPA; processing is essential to allow assembly of the oxygen-evolving complex and thus photosynthetic growth.

It is found in the plastid. The protein resides in the chloroplast thylakoid membrane. It carries out the reaction 2 a plastoquinone + 4 hnu + 2 H2O = 2 a plastoquinol + O2. Photosystem II (PSII) is a light-driven water:plastoquinone oxidoreductase that uses light energy to abstract electrons from H(2)O, generating O(2) and a proton gradient subsequently used for ATP formation. It consists of a core antenna complex that captures photons, and an electron transfer chain that converts photonic excitation into a charge separation. The D1/D2 (PsbA/PsbD) reaction center heterodimer binds P680, the primary electron donor of PSII as well as several subsequent electron acceptors. This chain is Photosystem II protein D1, found in Dumortiera hirsuta (Liverwort).